The sequence spans 149 residues: MSLQVNSVAIMLVVLILLGVLSNNNSITISALILLLMHQTFLGKYIPFLEKNGLKVGIIILTVGVLAPLVSGKVQLPAFKEFLNWQMFLSIVIGIAVAWFAGRGVNLMSSEPIVVTGLLIGTVLGVAFLGGIPVGPLIAAGILAVILGK.

Helical transmembrane passes span 10–32 (IMLV…ISAL), 56–76 (VGII…KVQL), 82–102 (FLNW…WFAG), and 126–146 (VAFL…LAVI).

Belongs to the UPF0756 family.

Its subcellular location is the cell membrane. The polypeptide is UPF0756 membrane protein MS1439 (Mannheimia succiniciproducens (strain KCTC 0769BP / MBEL55E)).